Here is a 464-residue protein sequence, read N- to C-terminus: Cysteine--tRNA ligase (464 aa).

A Zn(2+)-binding site is contributed by C27. Positions 29 to 39 (PTVYNYFHIGN) match the 'HIGH' region motif. Residues C207, H232, and E236 each contribute to the Zn(2+) site. The 'KMSKS' region motif lies at 264 to 268 (KMSKS). ATP is bound at residue K267.

This sequence belongs to the class-I aminoacyl-tRNA synthetase family. As to quaternary structure, monomer. The cofactor is Zn(2+).

The protein localises to the cytoplasm. The catalysed reaction is tRNA(Cys) + L-cysteine + ATP = L-cysteinyl-tRNA(Cys) + AMP + diphosphate. The sequence is that of Cysteine--tRNA ligase from Alkaliphilus oremlandii (strain OhILAs) (Clostridium oremlandii (strain OhILAs)).